The following is a 136-amino-acid chain: Protein NrdI (136 aa).

The protein belongs to the NrdI family.

Probably involved in ribonucleotide reductase function. This chain is Protein NrdI, found in Salmonella arizonae (strain ATCC BAA-731 / CDC346-86 / RSK2980).